A 169-amino-acid polypeptide reads, in one-letter code: General odorant-binding protein 57a (169 aa).

A signal peptide spans 1-20; it reads MFNTRLAIFLLLIVVSLSQA. Cystine bridges form between C39–C77, C73–C120, and C111–C129.

Belongs to the PBP/GOBP family.

Its function is as follows. Present in the aqueous fluid surrounding olfactory sensory dendrites and are thought to aid in the capture and transport of hydrophobic odorants into and through this fluid. The chain is General odorant-binding protein 57a from Drosophila melanogaster (Fruit fly).